Reading from the N-terminus, the 321-residue chain is Methenyltetrahydromethanopterin cyclohydrolase (321 aa).

Belongs to the MCH family.

The protein localises to the cytoplasm. It carries out the reaction 5,10-methenyl-5,6,7,8-tetrahydromethanopterin + H2O = N(5)-formyl-5,6,7,8-tetrahydromethanopterin + H(+). Its pathway is one-carbon metabolism; methanogenesis from CO(2); 5,10-methenyl-5,6,7,8-tetrahydromethanopterin from CO(2): step 3/3. In terms of biological role, catalyzes the reversible interconversion of 5-formyl-H(4)MPT to methenyl-H(4)MPT(+). This is Methenyltetrahydromethanopterin cyclohydrolase (mch) from Methanosarcina barkeri (strain Fusaro / DSM 804).